A 77-amino-acid polypeptide reads, in one-letter code: MSRVCQVTGKGPVTGNNISHANNKTRRRFLPNLQHHRFWVEGEKRFVRLRVSAKGMRIIDKRGIEVVLAELRRDGKI.

The interval 1–20 (MSRVCQVTGKGPVTGNNISH) is disordered.

This sequence belongs to the bacterial ribosomal protein bL28 family.

This Pseudomonas syringae pv. tomato (strain ATCC BAA-871 / DC3000) protein is Large ribosomal subunit protein bL28.